Here is a 640-residue protein sequence, read N- to C-terminus: Phosphomethylpyrimidine synthase (640 aa).

Substrate-binding positions include N235, M264, Y293, H329, 349–351, 390–393, and E429; these read SRG and DGLR. H433 is a binding site for Zn(2+). Y456 is a binding site for substrate. Residue H497 coordinates Zn(2+). The [4Fe-4S] cluster site is built by C577, C580, and C585.

The protein belongs to the ThiC family. Homodimer. The cofactor is [4Fe-4S] cluster.

It carries out the reaction 5-amino-1-(5-phospho-beta-D-ribosyl)imidazole + S-adenosyl-L-methionine = 4-amino-2-methyl-5-(phosphooxymethyl)pyrimidine + CO + 5'-deoxyadenosine + formate + L-methionine + 3 H(+). It participates in cofactor biosynthesis; thiamine diphosphate biosynthesis. Catalyzes the synthesis of the hydroxymethylpyrimidine phosphate (HMP-P) moiety of thiamine from aminoimidazole ribotide (AIR) in a radical S-adenosyl-L-methionine (SAM)-dependent reaction. The chain is Phosphomethylpyrimidine synthase from Photobacterium profundum (strain SS9).